The sequence spans 337 residues: uncharacterized protein (337 aa).

29 to 36 is a binding site for ATP; that stretch reads GPKSSGKS.

This sequence belongs to the archaeal ATPase family.

This is an uncharacterized protein from Methanocaldococcus jannaschii (strain ATCC 43067 / DSM 2661 / JAL-1 / JCM 10045 / NBRC 100440) (Methanococcus jannaschii).